A 20-amino-acid polypeptide reads, in one-letter code: Mite allergen Der p 6 (20 aa).

Residues 1-20 (AIGXQPAAEAEAPFQISLMK) enclose the Peptidase S1 domain.

This sequence belongs to the peptidase S1 family.

It is found in the secreted. Functionally, protease that shows specificity similar to chymotrypsin. In Dermatophagoides pteronyssinus (European house dust mite), this protein is Mite allergen Der p 6 (DERP6).